Here is a 138-residue protein sequence, read N- to C-terminus: Transcription antitermination protein NusB (138 aa).

This sequence belongs to the NusB family.

Involved in transcription antitermination. Required for transcription of ribosomal RNA (rRNA) genes. Binds specifically to the boxA antiterminator sequence of the ribosomal RNA (rrn) operons. This Limosilactobacillus reuteri (strain DSM 20016) (Lactobacillus reuteri) protein is Transcription antitermination protein NusB.